Here is a 393-residue protein sequence, read N- to C-terminus: Prokineticin receptor 1 (393 aa).

Over 1-62 (METTVGALGE…TNSRTFFAAK (62 aa)) the chain is Extracellular. N11 carries N-linked (GlcNAc...) asparagine glycosylation. Residues 63-83 (IVIGMALVGIMLVCGIGNFIF) traverse the membrane as a helical segment. The Cytoplasmic segment spans residues 84-98 (ITALARYKKLRNLTN). The chain crosses the membrane as a helical span at residues 99-119 (LLIANLAISDFLVAIVCCPFE). Residues 120–146 (MDYYVVRQLSWEHGHVLCASVNYLRTV) are Extracellular-facing. A disulfide bridge links C137 with C217. Residues 147–167 (SLYVSTNALLAIAIDRYLAIV) traverse the membrane as a helical segment. At 168–179 (HPLRPRMKCQTA) the chain is on the cytoplasmic side. The chain crosses the membrane as a helical span at residues 180–200 (AGLIFLVWSVSILIAIPAAYF). Over 201–232 (TTETVLVIVERQEKIFCGQIWPVDQQFYYRSY) the chain is Extracellular. The chain crosses the membrane as a helical span at residues 233–253 (FLLVFGLEFVGPVVAMTLCYA). Residues 254–282 (RVSRELWFKAVPGFQTEQIRRRLRCRRRT) are Cytoplasmic-facing. The helical transmembrane segment at 283–303 (VLGLVCVLSAYVLCWAPFYGF) threads the bilayer. Residues 304–322 (TIVRDFFPSVFVKEKHYLT) are Extracellular-facing. The chain crosses the membrane as a helical span at residues 323 to 343 (AFYVVECIAMSNSMINTLCFV). Residues 344–393 (TVRNNTSKYLKRILRLQWRASPSGSKASADLDLRTTGIPATEEVDCIRLK) are Cytoplasmic-facing.

The protein belongs to the G-protein coupled receptor 1 family. Expressed at high levels in the heart, skeletal muscle and pancreas. Expressed at lower levels in the brain, lung, liver and kidney.

It localises to the cell membrane. In terms of biological role, receptor for prokineticin 1. Exclusively coupled to the G(q) subclass of heteromeric G proteins. Activation leads to mobilization of calcium, stimulation of phosphoinositide turnover and activation of p44/p42 mitogen-activated protein kinase. May play a role during early pregnancy. The polypeptide is Prokineticin receptor 1 (Prokr1) (Mus musculus (Mouse)).